The primary structure comprises 237 residues: Phosphoribosylaminoimidazole-succinocarboxamide synthase (237 aa).

It belongs to the SAICAR synthetase family.

The enzyme catalyses 5-amino-1-(5-phospho-D-ribosyl)imidazole-4-carboxylate + L-aspartate + ATP = (2S)-2-[5-amino-1-(5-phospho-beta-D-ribosyl)imidazole-4-carboxamido]succinate + ADP + phosphate + 2 H(+). Its pathway is purine metabolism; IMP biosynthesis via de novo pathway; 5-amino-1-(5-phospho-D-ribosyl)imidazole-4-carboxamide from 5-amino-1-(5-phospho-D-ribosyl)imidazole-4-carboxylate: step 1/2. This Oceanobacillus iheyensis (strain DSM 14371 / CIP 107618 / JCM 11309 / KCTC 3954 / HTE831) protein is Phosphoribosylaminoimidazole-succinocarboxamide synthase.